The following is a 479-amino-acid chain: MDYHDPYFFGYVLGFIHLLGTGAAIHALLTVRTSQGAIAWAMPLLFIPYFTLLPYLVFGRSSFDAYIKARRQANQEMRIAIGDLNWRPWMEEAVAARRSEAYAALRAMPKLGNMPALANNKVKLLINGEETFGAIFQAIREAKKTILVQFFIIHDDKLGRELQSLLLEKAAEGVAIFVLYDRIGSHALPGAYIDKLRDGGVQIKAFATRGGWLNRFQINFRNHRKIVVVDGLKGYIGGHNVGDEYMGLKPPLAPWRDTHVQVIGPVVACLQESFAEDWFWATRELPPLSLPDEFPEDGVLCQLLTSGPADAQETCSLFFVEAIHAAEERVWITSPYFIPDEAVTAALTLAVLRGVDVRLLLPSRPDHYVVYAASSLYAFDAVRAGVRVFRYEPGFLHQKVVLVDNEITAIGSANLDNRSFRLNFELMLLTVDSDFSSQVESMLTADFNLAREISVQESHETRRLHQLGMRVARLISPIL.

2 helical membrane passes run 8–28 (FFGYVLGFIHLLGTGAAIHAL) and 38–58 (IAWAMPLLFIPYFTLLPYLVF). PLD phosphodiesterase domains are found at residues 218 to 245 (INFRNHRKIVVVDGLKGYIGGHNVGDEY) and 392 to 419 (EPGFLHQKVVLVDNEITAIGSANLDNRS). Catalysis depends on residues H223, K225, D230, H397, K399, and D404.

This sequence belongs to the phospholipase D family. Cardiolipin synthase subfamily. ClsA sub-subfamily.

The protein resides in the cell inner membrane. The enzyme catalyses 2 a 1,2-diacyl-sn-glycero-3-phospho-(1'-sn-glycerol) = a cardiolipin + glycerol. In terms of biological role, catalyzes the reversible phosphatidyl group transfer from one phosphatidylglycerol molecule to another to form cardiolipin (CL) (diphosphatidylglycerol) and glycerol. The sequence is that of Cardiolipin synthase A from Pseudomonas syringae pv. syringae (strain B728a).